The chain runs to 170 residues: Phosphopantetheine adenylyltransferase (170 aa).

Thr17 is a substrate binding site. Residues 17–18 (TF) and His25 each bind ATP. The substrate site is built by Lys49, Leu81, and Arg95. ATP-binding positions include 96–98 (GLR), Glu106, and 131–137 (LMYISST).

It belongs to the bacterial CoaD family. Homohexamer. Requires Mg(2+) as cofactor.

The protein resides in the cytoplasm. The enzyme catalyses (R)-4'-phosphopantetheine + ATP + H(+) = 3'-dephospho-CoA + diphosphate. It participates in cofactor biosynthesis; coenzyme A biosynthesis; CoA from (R)-pantothenate: step 4/5. Functionally, reversibly transfers an adenylyl group from ATP to 4'-phosphopantetheine, yielding dephospho-CoA (dPCoA) and pyrophosphate. This is Phosphopantetheine adenylyltransferase from Legionella pneumophila subsp. pneumophila (strain Philadelphia 1 / ATCC 33152 / DSM 7513).